The chain runs to 436 residues: Trigger factor (436 aa).

Positions 161–246 (GMRVTMDFVG…LNKVEEQILP (86 aa)) constitute a PPIase FKBP-type domain.

It belongs to the FKBP-type PPIase family. Tig subfamily.

The protein resides in the cytoplasm. The enzyme catalyses [protein]-peptidylproline (omega=180) = [protein]-peptidylproline (omega=0). In terms of biological role, involved in protein export. Acts as a chaperone by maintaining the newly synthesized protein in an open conformation. Functions as a peptidyl-prolyl cis-trans isomerase. This Aeromonas hydrophila subsp. hydrophila (strain ATCC 7966 / DSM 30187 / BCRC 13018 / CCUG 14551 / JCM 1027 / KCTC 2358 / NCIMB 9240 / NCTC 8049) protein is Trigger factor.